The sequence spans 1037 residues: Cysteine-rich motor neuron 1 protein (1037 aa).

Positions 1–34 (MYLVAGGRGLAGCGHLSVSLLGLLLLLARSGTRA) are cleaved as a signal peptide. The IGFBP N-terminal domain maps to 35 to 112 (LVCLPCDESK…EYEVGVCEDE (78 aa)). The Extracellular portion of the chain corresponds to 35 to 940 (LVCLPCDESK…HPGEDSSLDS (906 aa)). Cystine bridges form between Cys-37/Cys-60, Cys-40/Cys-62, Cys-45/Cys-63, Cys-51/Cys-66, Cys-74/Cys-90, and Cys-84/Cys-109. The short motif at 314–316 (RGD) is the Cell attachment site element. Asn-330 carries N-linked (GlcNAc...) asparagine glycosylation. VWFC domains lie at 334 to 391 (PACV…PVCE) and 401 to 457 (AGCY…PVCE). 4 consecutive Antistasin-like domains span residues 469 to 498 (CGEL…TCQC), 505 to 532 (CLGL…LCQC), 539 to 564 (CRPT…ICRC), and 567 to 592 (CPEL…ICKC). VWFC domains lie at 606–663 (GTCL…PSCT), 677–735 (SICH…PQCT), 751–809 (SYCR…PYCL), and 817–874 (VVCH…PMCP). The helical transmembrane segment at 941-961 (IVSVVVPIIICLSIIIAFLLI) threads the bilayer. Topologically, residues 962-1037 (NQKKQWVPLL…LQADNFYQTV (76 aa)) are cytoplasmic. A Phosphothreonine modification is found at Thr-1036.

Interacts with BMP4 and BMP7. Expressed during embryonic development in brain, kidney, spinal cord, testis, lens, vibrissae, pinna, tooth primordia and in specific regions of the CNS. Expressed in adult lens. Displays male-specific expression in the fetal gonads with the strongest expression in the Sertoli cells of developing testis.

The protein resides in the membrane. Functionally, may play a role in CNS development by interacting with growth factors implicated in motor neuron differentiation and survival. May play a role in capillary formation and maintenance during angiogenesis. Modulates BMP activity by affecting its processing and delivery to the cell surface. The sequence is that of Cysteine-rich motor neuron 1 protein (Crim1) from Mus musculus (Mouse).